Here is a 247-residue protein sequence, read N- to C-terminus: MRMKCTISYDGHLFYGYQVQPGQRTIQDELEKALQTLHKAKERIPVVSSGRTDSGVHAVGQTIHFDSPLSIPEAKWPYALNALLPDDISVRKAEAVNDQFHARFSAKRKEYRYMIYRGRHPDVFKRYYAYHVPYDLDMEKVKEASRYLVGTHDFTSFCATKTEVKDKVRTVHELEWSDTGDGLQMRIVGSGFLYNMVRIIAGTLLDVGTGKFSPGDIEKMILAKNRDAAGRTAPAHGLYLWRVIYDN.

Aspartate 53 (nucleophile) is an active-site residue. Tyrosine 111 is a substrate binding site.

Belongs to the tRNA pseudouridine synthase TruA family. Homodimer.

It catalyses the reaction uridine(38/39/40) in tRNA = pseudouridine(38/39/40) in tRNA. Formation of pseudouridine at positions 38, 39 and 40 in the anticodon stem and loop of transfer RNAs. The protein is tRNA pseudouridine synthase A of Bacillus licheniformis (strain ATCC 14580 / DSM 13 / JCM 2505 / CCUG 7422 / NBRC 12200 / NCIMB 9375 / NCTC 10341 / NRRL NRS-1264 / Gibson 46).